Here is a 157-residue protein sequence, read N- to C-terminus: Protein SINE4 (157 aa).

The KASH domain occupies 104–157 (VTSSSDTTKAKKKTTIRRFVSVTMVLLLSWVLVVLMNHFDHLSMNTQIITLVPT). A helical membrane pass occupies residues 122 to 142 (FVSVTMVLLLSWVLVVLMNHF). Residues 154-157 (LVPT) carry the Required for nuclear localization motif.

In terms of assembly, interacts with SUN1 and SUN2.

Its subcellular location is the nucleus membrane. This chain is Protein SINE4, found in Arabidopsis thaliana (Mouse-ear cress).